Reading from the N-terminus, the 404-residue chain is MFQINDNFQKLPGSYLFSTIAKKVAAYQEANPDKEIIRLGIGDVTQPLAPAIIDALHKAVDEMGNAATFHGYAPDLGYEFLRKAISDNDYKARGCDISADEIFVSDGAKSDSANIQELFSANSRIAVTDPVYPVYVDSNVMAGRTGTYDAQTETWSNVIYMPSTADNGFVPELPKEVPDMIYLCLPNNPTGTTLKKEQLQVWVDYANKNGSVIIFDAAYEAYISEADVPHSIYECNGAKTCAIELRSFSKNAGFTGVRLGFTVVPKELKCGDVSLHAMWARRHGTKFNGAPYIVQRAGEAVYSDAGKAQLKDQVAYYMNNAKTIKTGLAEAGFTVYGGVNAPYIWLKTPDQMTSWEFFDYLLENANVVGTPGSGFGPSGEGYFRLTAFGNYENTVKALERIKAL.

Residues Y15 and G42 each contribute to the substrate site. Pyridoxal 5'-phosphate-binding positions include Y72, 108-109 (AK), Y132, N188, Y219, and 247-249 (SFS). The substrate site is built by K109, Y132, and N188. K250 carries the post-translational modification N6-(pyridoxal phosphate)lysine. Residues R258 and N288 each coordinate pyridoxal 5'-phosphate. N288 and R384 together coordinate substrate.

It belongs to the class-I pyridoxal-phosphate-dependent aminotransferase family. LL-diaminopimelate aminotransferase subfamily. As to quaternary structure, homodimer. The cofactor is pyridoxal 5'-phosphate.

The catalysed reaction is (2S,6S)-2,6-diaminopimelate + 2-oxoglutarate = (S)-2,3,4,5-tetrahydrodipicolinate + L-glutamate + H2O + H(+). The protein operates within amino-acid biosynthesis; L-lysine biosynthesis via DAP pathway; LL-2,6-diaminopimelate from (S)-tetrahydrodipicolinate (aminotransferase route): step 1/1. Its function is as follows. Involved in the synthesis of meso-diaminopimelate (m-DAP or DL-DAP), required for both lysine and peptidoglycan biosynthesis. Catalyzes the direct conversion of tetrahydrodipicolinate to LL-diaminopimelate. In Agathobacter rectalis (strain ATCC 33656 / DSM 3377 / JCM 17463 / KCTC 5835 / VPI 0990) (Eubacterium rectale), this protein is LL-diaminopimelate aminotransferase.